A 135-amino-acid chain; its full sequence is Small ribosomal subunit protein eS24A (135 aa).

Position 2 is an N-acetylserine (S2). S14 is subject to Phosphoserine. Residue K21 forms a Glycyl lysine isopeptide (Lys-Gly) (interchain with G-Cter in ubiquitin) linkage. The residue at position 56 (S56) is a Phosphoserine. The interval 102-135 (KASRQQRKQKKNRDKKIFGTGKRLAKKVARRNAD) is disordered. Composition is skewed to basic residues over residues 105 to 115 (RQQRKQKKNRD) and 124 to 135 (RLAKKVARRNAD).

The protein belongs to the eukaryotic ribosomal protein eS24 family. Component of the small ribosomal subunit (SSU). Mature yeast ribosomes consist of a small (40S) and a large (60S) subunit. The 40S small subunit contains 1 molecule of ribosomal RNA (18S rRNA) and 33 different proteins (encoded by 57 genes). The large 60S subunit contains 3 rRNA molecules (25S, 5.8S and 5S rRNA) and 46 different proteins (encoded by 81 genes). Post-translationally, N-terminally acetylated by acetyltransferase NatA. Also partially acetylated by NatC.

It localises to the cytoplasm. Component of the ribosome, a large ribonucleoprotein complex responsible for the synthesis of proteins in the cell. The small ribosomal subunit (SSU) binds messenger RNAs (mRNAs) and translates the encoded message by selecting cognate aminoacyl-transfer RNA (tRNA) molecules. The large subunit (LSU) contains the ribosomal catalytic site termed the peptidyl transferase center (PTC), which catalyzes the formation of peptide bonds, thereby polymerizing the amino acids delivered by tRNAs into a polypeptide chain. The nascent polypeptides leave the ribosome through a tunnel in the LSU and interact with protein factors that function in enzymatic processing, targeting, and the membrane insertion of nascent chains at the exit of the ribosomal tunnel. The protein is Small ribosomal subunit protein eS24A of Saccharomyces cerevisiae (strain ATCC 204508 / S288c) (Baker's yeast).